Consider the following 524-residue polypeptide: Cytochrome P450 monooxygenase lnaC (524 aa).

Residues 16-36 (ALAVSCIAVSLFLLSPWIAYA) traverse the membrane as a helical segment. An N-linked (GlcNAc...) asparagine glycan is attached at Asn-150. A heme-binding site is contributed by Cys-471.

It belongs to the cytochrome P450 family. It depends on heme as a cofactor.

Its subcellular location is the membrane. It participates in secondary metabolite biosynthesis. In terms of biological role, cytochrome P450 monooxygenase; part of the lna gene cluster that mediates the biosynthesis of diastereomeric piperazines. Lna and lnb clusters encode sets of enzymes that produce overlapping sets of previously undescribed metabolites such as piperazinomycin-like metabolites or morpholine. The lna and lnb biosynthetic pathways appear to be part of a signaling network that controls the formation of sclerotia, a resilient overwintering structure. One primary function of the non-canonical nonribosomal peptide synthetases lnaA and lnbA consists in the reduction of L-tyrosine. The presence in the clusters of tailoring enzymes such as the oxidoreductases lnaB, lnbB, lnaE or lnbE, as well as of the cytochrome P450 monooxygenases lnaC, lnaD, or lnbC, might explain formation of various diastereomeric piperazines. The sequence is that of Cytochrome P450 monooxygenase lnaC from Aspergillus flavus (strain ATCC 200026 / FGSC A1120 / IAM 13836 / NRRL 3357 / JCM 12722 / SRRC 167).